Consider the following 315-residue polypeptide: Protoheme IX farnesyltransferase 1 (315 aa).

9 consecutive transmembrane segments (helical) span residues 25–45 (PGII…AAKG), 49–69 (LALM…GCAV), 87–107 (RVTV…LALG), 120–139 (ALAL…VYSL), 145–165 (SVYG…VGYC), 176–196 (AILL…IAIF), 220–240 (LHIV…PLAG), 242–262 (TGIA…AMAL), and 280–300 (GFSI…SQVI).

The protein belongs to the UbiA prenyltransferase family. Protoheme IX farnesyltransferase subfamily.

It localises to the cell inner membrane. The catalysed reaction is heme b + (2E,6E)-farnesyl diphosphate + H2O = Fe(II)-heme o + diphosphate. It participates in porphyrin-containing compound metabolism; heme O biosynthesis; heme O from protoheme: step 1/1. Functionally, converts heme B (protoheme IX) to heme O by substitution of the vinyl group on carbon 2 of heme B porphyrin ring with a hydroxyethyl farnesyl side group. In Shewanella sp. (strain W3-18-1), this protein is Protoheme IX farnesyltransferase 1.